We begin with the raw amino-acid sequence, 283 residues long: uncharacterized protein (283 aa).

3 Solcar repeats span residues 14-95 (QPVW…LKHL), 102-185 (NDHA…SEAV), and 190-274 (GLAL…TLQG). 6 helical membrane-spanning segments follow: residues 20-40 (TLAGGISSVICRFMIAPFDVI), 70-90 (GNVVAELLYLVYGAAEFVAFS), 105-125 (AVNFLCGTSAGIFATLTSYPL), 157-177 (FFPGLKFSVIQIGPYAGCFFM), 184-204 (AVLSPLGLALSSTLSGVIAGA), and 249-266 (GLSVSMLKVAPGRAITML).

Belongs to the mitochondrial carrier (TC 2.A.29) family.

The protein resides in the mitochondrion inner membrane. This is an uncharacterized protein from Schizosaccharomyces pombe (strain 972 / ATCC 24843) (Fission yeast).